A 684-amino-acid chain; its full sequence is MSDKNKLLLLFDRPLETVIVPRGPDQEAFDVPVDLLSDRYKAIGVQVSNRFGEETKSKIPVKKISPPPLGEILDLPRQANFSLFIPKHRKIAGRLINIFLGMKDTDDLQSMAIFARERVNPYLFNYCFSVAILHRPDTQDLDIPSFIQTFPDKYLDSQVFSRAREEATLVPEGQRVPIEIPRDYTASDLEVEHRVAYFREDLGINLHHWHWHLVYPFEGAEQVVRKDRRGELFYYMHQQVIARYNLERFCNALKRVTRFTEWKDPIPEAYFPKLDSLVASRAWPARVTDQKLSNLRRDQDQITQDVDDLYRWRDRIYEAIHSGFVQTDGGGRQELTEFGGIDILGNIVESSNLSVNRTLYGDLHNMGHVFISYIHDPDHRHLETFGVMGDSATAMRDPVFYRWHAYIDDLFQQFKGSLPRYTEEQLNYPGITVTGVSVQSQGGAANTLNTFWQQSDVDMSRGMDFQPRGSVFARFTHLNHQPFAYNITVNNASGGNKRGTCRIFLGPKTDERRTAWLFKDQRLLFIELDRFVVNLRQGENTITRNSTESSVTIPFERTFRNLDLSRPVGGEALAQFNFCGCGWPQHMLIPKGTPEGYDCQLFVMISNFDDDQVVQSTEGICNDAMSYCGIKDRLYPDKRSMGYPFDRLPRNNVNTLQEFLTPNMRVQDCVIKFTDRVVVPRPRN.

Residues 1 to 50 constitute a propeptide, removed by PPAF1; sequence MSDKNKLLLLFDRPLETVIVPRGPDQEAFDVPVDLLSDRYKAIGVQVSNR. Residue N80 is glycosylated (N-linked (GlcNAc...) asparagine). Cu cation is bound by residues H208, H212, and H237. Residue E349 is the Proton acceptor of the active site. 2 N-linked (GlcNAc...) asparagine glycosylation sites follow: N352 and N356. Cu cation is bound by residues H364, H368, and H404. 3 N-linked (GlcNAc...) asparagine glycosylation sites follow: N486, N491, and N545. Disulfide bonds link C579-C621 and C581-C628.

Belongs to the tyrosinase family. In terms of assembly, dimer. Might form a homodimer or a heterodimer with PPO1. Might interact with PPAF2 (via CLIP domain); the interaction might be required for PPO1 activity. Cu(2+) serves as cofactor. Propeptide cleaved by PPAF1. As to expression, hemocytes.

The protein localises to the secreted. In terms of biological role, this is a copper-containing oxidase that functions in the formation of pigments such as melanins and other polyphenolic compounds. Catalyzes the oxidation of o-diphenols (N-acetyldopamine, 4-methylcatechol and dopamine). Cannot oxidize monophenols and p-phenols (L-tyrosine, tyramine, gentisic acid and hydroquinone). Binds to the surface of hemocytes and is involved in hemocyte melanization. Activation of the enzyme in response to bacterial lipopolysaccharides (LPS) suggests it may play a role in innate immunity. The protein is Phenoloxidase 1 of Holotrichia diomphalia (Korean black chafer).